A 430-amino-acid chain; its full sequence is Adenylosuccinate synthetase (430 aa).

Residues 12-18 (GDEGKGK) and 40-42 (GHT) contribute to the GTP site. The active-site Proton acceptor is D13. Residues D13 and G40 each contribute to the Mg(2+) site. Residues 13–16 (DEGK), 38–41 (NAGH), T130, R144, Q224, T239, and R303 contribute to the IMP site. H41 (proton donor) is an active-site residue. 299–305 (TNTGRPR) lines the substrate pocket. Residues R305, 331 to 333 (KLD), and 413 to 415 (STS) contribute to the GTP site.

Belongs to the adenylosuccinate synthetase family. As to quaternary structure, homodimer. Requires Mg(2+) as cofactor.

It is found in the cytoplasm. It catalyses the reaction IMP + L-aspartate + GTP = N(6)-(1,2-dicarboxyethyl)-AMP + GDP + phosphate + 2 H(+). Its pathway is purine metabolism; AMP biosynthesis via de novo pathway; AMP from IMP: step 1/2. Plays an important role in the de novo pathway of purine nucleotide biosynthesis. Catalyzes the first committed step in the biosynthesis of AMP from IMP. The sequence is that of Adenylosuccinate synthetase from Rhodopseudomonas palustris (strain BisB5).